Reading from the N-terminus, the 425-residue chain is Mothers against decapentaplegic homolog 3 (425 aa).

Ser-2 is subject to N-acetylserine. Position 8 is a phosphothreonine; by CDK2 and CDK4 (Thr-8). Positions 10–136 (PIVKRLLGWK…YQRVETPVLP (127 aa)) constitute an MH1 domain. Residue Lys-33 forms a Glycyl lysine isopeptide (Lys-Gly) (interchain with G-Cter in ubiquitin) linkage. Position 64 (Cys-64) interacts with Zn(2+). Residue Lys-81 forms a Glycyl lysine isopeptide (Lys-Gly) (interchain with G-Cter in ubiquitin) linkage. Zn(2+)-binding residues include Cys-109, Cys-121, and His-126. Residues 137 to 231 (PVLVPRHTEI…QPVTYCEPAF (95 aa)) are linker. A compositionally biased stretch (polar residues) spans 165–177 (NFPAGIEPQSNIP). Positions 165–208 (NFPAGIEPQSNIPETPPPGYLSEDGETSDHQMNHSMDAGSPNLS) are disordered. At Thr-179 the chain carries Phosphothreonine; by CDK2, CDK4 and MAPK. Ser-204 is subject to Phosphoserine; by GSK3 and MAPK. Ser-208 is modified (phosphoserine; by MAPK). A Phosphoserine; by CDK2 and CDK4 modification is found at Ser-213. Positions 232–425 (WCSISYYELN…SPSIRCSSVS (194 aa)) constitute an MH2 domain. The segment at 271–324 (LGLLSNVNRNAAVELTRRHIGRGVRLYYIGGEVFAECLSDSAIFVQSPNCNQRY) is sufficient for interaction with XPO4. Lys-378 carries the N6-acetyllysine modification. Residue Ser-416 is modified to Phosphoserine. Phosphoserine; by CK1 is present on Ser-418. Residues Ser-422, Ser-423, and Ser-425 each carry the phosphoserine; by TGFBR1 modification.

Belongs to the dwarfin/SMAD family. As to quaternary structure, monomer; in the absence of TGF-beta. Homooligomer; in the presence of TGF-beta. Heterotrimer; forms a heterotrimer in the presence of TGF-beta consisting of two molecules of C-terminally phosphorylated SMAD2 or SMAD3 and one of SMAD4 to form the transcriptionally active SMAD2/SMAD3-SMAD4 complex. Part of a complex consisting of MAGI2/ARIP1, ACVR2A, ACVR1B and SMAD3. Forms a complex with SMAD2 and TRIM33 upon addition of TGF-beta. Found in a complex composed of SMAD3, RAN and XPO4; within the complex interacts directly with XPO4. Component of the multimeric complex SMAD3/SMAD4/JUN/FOS which forms at the AP1 promoter site; required for synergistic transcriptional activity in response to TGF-beta. Part of a ternary complex composed of SMAD3, ITCH/AIP4 and NEDD9/HEF1; within the complex NEDD9/HEF1 interacts (via N-terminus) with ITCH/AIP4; the complex mediates ubiquitination and proteasomal degradation of NEDD9/HEF1. Interacts with NEDD9; the interaction promotes NEDD9 ubiquitination and proteasomal degradation. Interacts (via an N-terminal domain) with JUN (via its basic DNA binding and leucine zipper domains); this interaction is essential for DNA binding and cooperative transcriptional activity in response to TGF-beta. Identified in a complex that contains at least ZNF451, SMAD2, SMAD3 and SMAD4. Interacts with PPM1A; the interaction dephosphorylates SMAD3 in the C-terminal SXS motif leading to disruption of the SMAD2/3-SMAD4 complex, nuclear export and termination of TGF-beta signaling. Interacts (via MH2 domain) with ZMIZ1 (via SP-RING-type domain); in the TGF-beta signaling pathway increases the activity of the SMAD3/SMAD4 transcriptional complex. Interacts (when phosphorylated) with RNF111; RNF111 acts as an enhancer of the transcriptional responses by mediating ubiquitination and degradation of SMAD3 inhibitors. Interacts (dephosphorylated form via the MH1 and MH2 domains) with RANBP3 (via its C-terminal R domain); the interaction results in the export of dephosphorylated SMAD3 out of the nucleus and termination of the TGF-beta signaling. Interacts (via MH2 domain) with LEMD3; the interaction represses SMAD3 transcriptional activity through preventing the formation of the heteromeric complex with SMAD4 and translocation to the nucleus. Interacts (via the linker region) with EP300 (C-terminal); the interaction promotes SMAD3 acetylation and is enhanced by TGF-beta phosphorylation in the C-terminal of SMAD3. This interaction can be blocked by competitive binding of adenovirus oncoprotein E1A to the same C-terminal site on EP300, which then results in partially inhibited SMAD3/SMAD4 transcriptional activity. Interacts with TGFBR1. Interacts with TGFB1I1. Interacts with PRDM16. Interacts with SNW1. Interacts (via MH2 domain) with ZFYVE9. Interacts with HDAC1. Interacts with TGIF2. Interacts with SKOR1. Interacts with SKOR2. Interacts with DACH1; the interaction inhibits the TGF-beta signaling. Interacts with RBPMS. Interacts (via MH2 domain) with MECOM. Interacts with WWTR1 (via its coiled-coil domain). Interacts with SKI; the interaction represses SMAD3 transcriptional activity. Interacts with MEN1. Interacts with IL1F7. Interaction with CSNK1G2. Interacts with PDPK1 (via PH domain). Interacts with DAB2; the interactions are enhanced upon TGF-beta stimulation. Interacts with USP15. Interacts with PPP5C; the interaction decreases SMAD3 phosphorylation and protein levels. Interacts with LDLRAD4 (via the SMAD interaction motif). Interacts with PMEPA1. Interacts with ZNF451. Interacts with ZFHX3. Interacts weakly with ZNF8. Interacts with STUB1, HSPA1A, HSPA1B, HSP90AA1 and HSP90AB1. Interacts with YAP1 (when phosphorylated at 'Ser-55'). Interacts with MAGI2/ARIP1. Interacts (via MH2 domain) with CITED2 (via C-terminus). Interacts with HGS. Interacts with WWP1. Interacts with TTRAP. Interacts with FOXL2. Interacts with PML. Interacts with NEDD4L; the interaction requires TGF-beta stimulation. Interacts with ZC3H3. Interacts with TGIF. Interacts with CREBBP. Interacts with ATF2. Interacts with NEDD9; the interaction is inhibited by oxidation of NEDD9. Interacts with MTMR4; negatively regulates TGF-beta signaling through SMAD3 dephosphorylation and retention in endosomes. Phosphorylated on serine and threonine residues. Enhanced phosphorylation in the linker region on Thr-179, Ser-204 and Ser-208 on EGF and TGF-beta treatment. Ser-208 is the main site of MAPK-mediated phosphorylation. CDK-mediated phosphorylation occurs in a cell-cycle dependent manner and inhibits both the transcriptional activity and antiproliferative functions of SMAD3. This phosphorylation is inhibited by flavopiridol. Maximum phosphorylation at the G(1)/S junction. Also phosphorylated on serine residues in the C-terminal SXS motif by TGFBR1 and ACVR1. TGFBR1-mediated phosphorylation at these C-terminal sites is required for interaction with SMAD4, nuclear location and transactivational activity, and appears to be a prerequisite for the TGF-beta mediated phosphorylation in the linker region. Dephosphorylated in the C-terminal SXS motif by PPM1A. This dephosphorylation disrupts the interaction with SMAD4, promotes nuclear export and terminates TGF-beta-mediated signaling. Phosphorylation at Ser-418 by CSNK1G2/CK1 promotes ligand-dependent ubiquitination and subsequent proteasome degradation, thus inhibiting SMAD3-mediated TGF-beta responses. Phosphorylated by PDPK1. Post-translationally, acetylation in the nucleus by EP300 in the MH2 domain regulates positively its transcriptional activity and is enhanced by TGF-beta. In terms of processing, poly-ADP-ribosylated by PARP1 and PARP2. ADP-ribosylation negatively regulates SMAD3 transcriptional responses during the course of TGF-beta signaling. Ubiquitinated. Monoubiquitinated, leading to prevent DNA-binding. Deubiquitination by USP15 alleviates inhibition and promotes activation of TGF-beta target genes. Ubiquitinated by RNF111, leading to its degradation: only SMAD3 proteins that are 'in use' are targeted by RNF111, RNF111 playing a key role in activating SMAD3 and regulating its turnover. Undergoes STUB1-mediated ubiquitination and degradation. In terms of tissue distribution, highly expressed in the brain and ovary. Detected in the pyramidal cells of the hippocampus, granule cells of the dentate gyrus, granular cells of the cerebral cortex and the granulosa cells of the ovary.

The protein resides in the cytoplasm. The protein localises to the nucleus. In terms of biological role, receptor-regulated SMAD (R-SMAD) that is an intracellular signal transducer and transcriptional modulator activated by TGF-beta (transforming growth factor) and activin type 1 receptor kinases. Binds the TRE element in the promoter region of many genes that are regulated by TGF-beta and, on formation of the SMAD3/SMAD4 complex, activates transcription. Also can form a SMAD3/SMAD4/JUN/FOS complex at the AP-1/SMAD site to regulate TGF-beta-mediated transcription. Has an inhibitory effect on wound healing probably by modulating both growth and migration of primary keratinocytes and by altering the TGF-mediated chemotaxis of monocytes. This effect on wound healing appears to be hormone-sensitive. Regulator of chondrogenesis and osteogenesis and inhibits early healing of bone fractures. Positively regulates PDPK1 kinase activity by stimulating its dissociation from the 14-3-3 protein YWHAQ which acts as a negative regulator. This Sus scrofa (Pig) protein is Mothers against decapentaplegic homolog 3 (SMAD3).